Here is a 273-residue protein sequence, read N- to C-terminus: SUMO-1 cysteine protease S273R (273 aa).

Catalysis depends on residues H168 and N187. Q226 contacts substrate. C232 (nucleophile) is an active-site residue.

Belongs to the peptidase C63 family.

The protein localises to the host cytoplasm. Its subcellular location is the virion. Cysteine protease that plays several role during infection including processing of the structural polyprotein or inhibition of the host immune response. Catalyzes the maturation of the pp220 and pp62 polyprotein precursors into core-shell proteins. Plays a role in the disruption of host pyroptosis via specific cleavage of gasdermin D/GSDMD. In addition, strongly decreases the host cGAS-STING signaling by targeting IKBKE via its enzymatic activity. Also impairs host FOXJ1-mediated antiviral effect via degradation of FOXJ1. The chain is SUMO-1 cysteine protease S273R from Ornithodoros (relapsing fever ticks).